The chain runs to 364 residues: Peptide chain release factor 2 (364 aa).

Residue glutamine 251 is modified to N5-methylglutamine.

It belongs to the prokaryotic/mitochondrial release factor family. Post-translationally, methylated by PrmC. Methylation increases the termination efficiency of RF2.

Its subcellular location is the cytoplasm. Peptide chain release factor 2 directs the termination of translation in response to the peptide chain termination codons UGA and UAA. The polypeptide is Peptide chain release factor 2 (Campylobacter hominis (strain ATCC BAA-381 / DSM 21671 / CCUG 45161 / LMG 19568 / NCTC 13146 / CH001A)).